Reading from the N-terminus, the 224-residue chain is Flagellar L-ring protein (224 aa).

A signal peptide spans 1-15 (MARYFILAAALLLTA). Cysteine 16 carries N-palmitoyl cysteine lipidation. Cysteine 16 carries the S-diacylglycerol cysteine lipid modification.

Belongs to the FlgH family. The basal body constitutes a major portion of the flagellar organelle and consists of four rings (L,P,S, and M) mounted on a central rod.

The protein resides in the cell outer membrane. The protein localises to the bacterial flagellum basal body. Functionally, assembles around the rod to form the L-ring and probably protects the motor/basal body from shearing forces during rotation. This chain is Flagellar L-ring protein, found in Shewanella sp. (strain MR-4).